Consider the following 585-residue polypeptide: Arginine--tRNA ligase (585 aa).

Positions 131-141 match the 'HIGH' region motif; that stretch reads ANPTGPMHVGH.

This sequence belongs to the class-I aminoacyl-tRNA synthetase family. As to quaternary structure, monomer.

The protein resides in the cytoplasm. It catalyses the reaction tRNA(Arg) + L-arginine + ATP = L-arginyl-tRNA(Arg) + AMP + diphosphate. The chain is Arginine--tRNA ligase from Brucella melitensis biotype 1 (strain ATCC 23456 / CCUG 17765 / NCTC 10094 / 16M).